A 61-amino-acid chain; its full sequence is Large ribosomal subunit protein uL30 (61 aa).

The protein belongs to the universal ribosomal protein uL30 family. Part of the 50S ribosomal subunit.

The chain is Large ribosomal subunit protein uL30 from Lacticaseibacillus casei (strain BL23) (Lactobacillus casei).